We begin with the raw amino-acid sequence, 49 residues long: DNA-directed RNA polymerase subunit Rpo12 (49 aa).

The Zn(2+) site is built by C11, C27, and C30.

It belongs to the archaeal Rpo12/eukaryotic RPC10 RNA polymerase subunit family. In terms of assembly, part of the RNA polymerase complex. Zn(2+) is required as a cofactor.

The protein resides in the cytoplasm. It carries out the reaction RNA(n) + a ribonucleoside 5'-triphosphate = RNA(n+1) + diphosphate. DNA-dependent RNA polymerase (RNAP) catalyzes the transcription of DNA into RNA using the four ribonucleoside triphosphates as substrates. This is DNA-directed RNA polymerase subunit Rpo12 from Pyrococcus furiosus (strain ATCC 43587 / DSM 3638 / JCM 8422 / Vc1).